Consider the following 133-residue polypeptide: Small ribosomal subunit protein uS8 (133 aa).

Belongs to the universal ribosomal protein uS8 family. As to quaternary structure, part of the 30S ribosomal subunit. Contacts proteins S5 and S12.

One of the primary rRNA binding proteins, it binds directly to 16S rRNA central domain where it helps coordinate assembly of the platform of the 30S subunit. The chain is Small ribosomal subunit protein uS8 from Parasynechococcus marenigrum (strain WH8102).